The sequence spans 249 residues: Small ribosomal subunit protein uS5 (249 aa).

Basic and acidic residues predominate over residues 1–14 (MSAEAPKRQFGDRR). The interval 1-29 (MSAEAPKRQFGDRRRGGRRGGRRDGEEKG) is disordered. Positions 71-134 (LKDDVMKIRS…VIAKLSIIPI (64 aa)) constitute an S5 DRBM domain.

It belongs to the universal ribosomal protein uS5 family. In terms of assembly, component of the small ribosomal subunit. Mature ribosomes consist of a small (40S) and a large (60S) subunit. The 40S subunit contains about 32 different proteins and 1 molecule of RNA (18S). The 60S subunit contains 45 different proteins and 3 molecules of RNA (25S, 5.8S and 5S).

Its subcellular location is the cytoplasm. In terms of biological role, component of the ribosome, a large ribonucleoprotein complex responsible for the synthesis of proteins in the cell. The small ribosomal subunit (SSU) binds messenger RNAs (mRNAs) and translates the encoded message by selecting cognate aminoacyl-transfer RNA (tRNA) molecules. The large subunit (LSU) contains the ribosomal catalytic site termed the peptidyl transferase center (PTC), which catalyzes the formation of peptide bonds, thereby polymerizing the amino acids delivered by tRNAs into a polypeptide chain. The nascent polypeptides leave the ribosome through a tunnel in the LSU and interact with protein factors that function in enzymatic processing, targeting, and the membrane insertion of nascent chains at the exit of the ribosomal tunnel. RPS2 is important for the assembly and function of the 40S ribosomal subunitand is nvolved in nucleolar processing of pre-18S ribosomal RNA and ribosome assembly. The chain is Small ribosomal subunit protein uS5 (RPS21) from Candida albicans (strain SC5314 / ATCC MYA-2876) (Yeast).